A 256-amino-acid polypeptide reads, in one-letter code: Imidazole glycerol phosphate synthase subunit HisF (256 aa).

Catalysis depends on residues Asp12 and Asp131.

Belongs to the HisA/HisF family. As to quaternary structure, heterodimer of HisH and HisF.

The protein localises to the cytoplasm. It catalyses the reaction 5-[(5-phospho-1-deoxy-D-ribulos-1-ylimino)methylamino]-1-(5-phospho-beta-D-ribosyl)imidazole-4-carboxamide + L-glutamine = D-erythro-1-(imidazol-4-yl)glycerol 3-phosphate + 5-amino-1-(5-phospho-beta-D-ribosyl)imidazole-4-carboxamide + L-glutamate + H(+). The protein operates within amino-acid biosynthesis; L-histidine biosynthesis; L-histidine from 5-phospho-alpha-D-ribose 1-diphosphate: step 5/9. Functionally, IGPS catalyzes the conversion of PRFAR and glutamine to IGP, AICAR and glutamate. The HisF subunit catalyzes the cyclization activity that produces IGP and AICAR from PRFAR using the ammonia provided by the HisH subunit. The sequence is that of Imidazole glycerol phosphate synthase subunit HisF from Azotobacter vinelandii (strain DJ / ATCC BAA-1303).